A 200-amino-acid polypeptide reads, in one-letter code: Adenylate kinase (200 aa).

10–15 is a binding site for ATP; that stretch reads GAGKGT. Residues 30-59 are NMP; the sequence is STGDLFRANISQQTELGKLAKSYMDAGNLV. Residues Thr-31, Arg-36, 57–59, 84–87, and Gln-91 each bind AMP; these read NLV and GFPR. The LID stretch occupies residues 125–163; that stretch reads GRRVCRNDSAHVFHVTYTPPKKEGVCDVCGGELYQRDDD. ATP contacts are provided by residues Arg-126 and 136–137; that span reads VF. Positions 160 and 171 each coordinate AMP.

Belongs to the adenylate kinase family. As to quaternary structure, monomer.

It is found in the cytoplasm. It carries out the reaction AMP + ATP = 2 ADP. Its pathway is purine metabolism; AMP biosynthesis via salvage pathway; AMP from ADP: step 1/1. Catalyzes the reversible transfer of the terminal phosphate group between ATP and AMP. Plays an important role in cellular energy homeostasis and in adenine nucleotide metabolism. The sequence is that of Adenylate kinase from Streptomyces lividans.